We begin with the raw amino-acid sequence, 203 residues long: Ribonuclease HII (203 aa).

The RNase H type-2 domain maps to 15-201 (LLVAGLDEAG…VAQAPLRFPE (187 aa)). The a divalent metal cation site is built by aspartate 21, glutamate 22, and aspartate 111.

Belongs to the RNase HII family. Requires Mn(2+) as cofactor. Mg(2+) is required as a cofactor.

The protein resides in the cytoplasm. The catalysed reaction is Endonucleolytic cleavage to 5'-phosphomonoester.. Endonuclease that specifically degrades the RNA of RNA-DNA hybrids. The sequence is that of Ribonuclease HII from Thermus thermophilus (strain ATCC BAA-163 / DSM 7039 / HB27).